A 769-amino-acid polypeptide reads, in one-letter code: Sensor protein DivL (769 aa).

The chain crosses the membrane as a helical span at residues L6 to H26. Positions N547 to Q758 constitute a Histidine kinase domain. Residue Y550 is modified to Phosphotyrosine; by autocatalysis.

In terms of processing, autophosphorylated.

It is found in the cell membrane. It catalyses the reaction ATP + protein L-histidine = ADP + protein N-phospho-L-histidine.. Required for cell division and growth. It catalyzes the phosphorylation of CtrA and activates transcription in vitro of the cell cycle-regulated fliF promoter. In Caulobacter vibrioides (strain ATCC 19089 / CIP 103742 / CB 15) (Caulobacter crescentus), this protein is Sensor protein DivL (divL).